Reading from the N-terminus, the 423-residue chain is Histidine--tRNA ligase (423 aa).

The protein belongs to the class-II aminoacyl-tRNA synthetase family. In terms of assembly, homodimer.

The protein localises to the cytoplasm. The catalysed reaction is tRNA(His) + L-histidine + ATP = L-histidyl-tRNA(His) + AMP + diphosphate + H(+). In Staphylococcus haemolyticus (strain JCSC1435), this protein is Histidine--tRNA ligase.